Reading from the N-terminus, the 175-residue chain is Putative FAS1 domain-containing protein 081L (175 aa).

The FAS1 domain occupies 28 to 172; that stretch reads GPIVPSVWTI…GLVHIVDQFP (145 aa).

In Invertebrate iridescent virus 3 (IIV-3), this protein is Putative FAS1 domain-containing protein 081L.